Consider the following 269-residue polypeptide: MNLNNLENIRYNEIKEFSDKIKKEFTFFQKKQVMDIIEKLNKDPRKNVIKLGQALEKFLNKYEEELKRTNNMYNFDRRYGNNYLIAGVDEVGRGPLAGPIVAAAVVLDLNVEEMQRIFNIKDSKKLSEKKREELDIIIREKAISYNIALVDNKTIDERGISWSNNEVLKRAVEGLKVKPDLVLSDGYAVKNLNIRNEFIIKGDSKSISIASSSIIAKVYRDNMMKEYSKGLNMYGFNHNAGYGTEEHVQAIKKYGPSKIHRMSFLTNIL.

In terms of domain architecture, RNase H type-2 spans 83-269 (YLIAGVDEVG…HRMSFLTNIL (187 aa)). Residues Asp89, Glu90, and Asp185 each contribute to the a divalent metal cation site.

This sequence belongs to the RNase HII family. Requires Mn(2+) as cofactor. Mg(2+) serves as cofactor.

It is found in the cytoplasm. The catalysed reaction is Endonucleolytic cleavage to 5'-phosphomonoester.. In terms of biological role, endonuclease that specifically degrades the RNA of RNA-DNA hybrids. The polypeptide is Ribonuclease HII (Clostridium botulinum (strain Langeland / NCTC 10281 / Type F)).